We begin with the raw amino-acid sequence, 561 residues long: Acyl-CoA ligase ppsA (561 aa).

N-linked (GlcNAc...) asparagine glycosylation occurs at asparagine 21. The helical transmembrane segment at 71 to 91 (SILYPALFLAIVGVGAVYMGA) threads the bilayer. 203–214 (MFATSGTSGLPK) provides a ligand contact to AMP. The N-linked (GlcNAc...) asparagine glycan is linked to asparagine 396. The tract at residues 462–540 (ELEAELAQHP…DSIPRNSGGK (79 aa)) is AMP-binding.

Belongs to the ATP-dependent AMP-binding enzyme family.

The protein localises to the membrane. It catalyses the reaction acetate + ATP + CoA = acetyl-CoA + ADP + phosphate. It carries out the reaction propanoate + ATP + CoA = propanoyl-CoA + AMP + diphosphate. The protein operates within secondary metabolite biosynthesis. Its function is as follows. Acyl-CoA ligase; part of the gene cluster that mediates the biosynthesis of 2,4'-dihydroxy-3'-methoxypropiophenone. The first step of the pathway is the conversion of acetate into acetyl-CoA by the acyl-CoA ligase ppsA. Acetyl-CoA is then used as a starter unit by the polyketide synthase ppsB and condensed with 4 malonyl-CoA unit to produce the pentaketide backbone. During polyketide extension, the polykedite chain is probably reduced and dehydrated by the KR and PT domains, respectively. O-methylation seems to be catalyzed by an unknown methyltransferase rather than by the CMeT domain of ppsB. Two hydroxylations and one further decarboxylation step catalyzed by yet unknown enzymes are then required to yield 4'-hydroxy-3'-methoxypropiophenone. PpsC functions as a carrier protein to transport 4'-hydroxy-3'-methoxypropiophenone to a specific cell compartment in which 4'-hydroxy-3'-methoxypropiophenone is hydroxylated to 2,4'-dihydroxy-3'-methoxypropiophenone by a still to be identified enzyme. The chain is Acyl-CoA ligase ppsA from Aspergillus oryzae (strain ATCC 42149 / RIB 40) (Yellow koji mold).